Reading from the N-terminus, the 100-residue chain is MARKSLIQREKKRKKLEQKYHLIRRSLKQEIHKVSLLSEKREIYVKLQSLPRNSAPTRLRRRCFMTGRPRANYRDFELSGHILREMVETCLLPGAMRSSW.

The protein belongs to the universal ribosomal protein uS14 family. As to quaternary structure, part of the 30S ribosomal subunit.

The protein localises to the plastid. Its function is as follows. Binds 16S rRNA, required for the assembly of 30S particles. The chain is Small ribosomal subunit protein uS14c (rps14) from Cuscuta gronovii (Common dodder).